We begin with the raw amino-acid sequence, 134 residues long: Profilin-2 (134 aa).

The cysteines at positions 13 and 118 are disulfide-linked. The Involved in PIP2 interaction motif lies at 84 to 100 (AVIRGKKGAGGITIKKT). Thr-114 carries the post-translational modification Phosphothreonine.

The protein belongs to the profilin family. In terms of assembly, occurs in many kinds of cells as a complex with monomeric actin in a 1:1 ratio. Phosphorylated by MAP kinases.

The protein localises to the cytoplasm. Its subcellular location is the cytoskeleton. In terms of biological role, binds to actin and affects the structure of the cytoskeleton. At high concentrations, profilin prevents the polymerization of actin, whereas it enhances it at low concentrations. The polypeptide is Profilin-2 (Olea europaea (Common olive)).